Consider the following 223-residue polypeptide: Proteasome subunit beta type-1 (223 aa).

This sequence belongs to the peptidase T1B family. As to quaternary structure, component of the 20S core complex of the 26S proteasome. The 26S proteasome is composed of a core protease (CP), known as the 20S proteasome, capped at one or both ends by the 19S regulatory particle (RP/PA700). The 20S proteasome core is composed of 28 subunits that are arranged in four stacked rings, resulting in a barrel-shaped structure. The two end rings are each formed by seven alpha subunits, and the two central rings are each formed by seven beta subunits. The catalytic chamber with the active sites is on the inside of the barrel. Present in all tissues examined. Slightly lower levels in roots.

It is found in the cytoplasm. It localises to the nucleus. Its function is as follows. Non-catalytic component of the proteasome, a multicatalytic proteinase complex which is characterized by its ability to cleave peptides with Arg, Phe, Tyr, Leu, and Glu adjacent to the leaving group at neutral or slightly basic pH. The proteasome has an ATP-dependent proteolytic activity. The sequence is that of Proteasome subunit beta type-1 (PBF1) from Arabidopsis thaliana (Mouse-ear cress).